The primary structure comprises 61 residues: uncharacterized protein (61 aa).

The next 2 helical transmembrane spans lie at 5–25 and 29–49; these read MLYF…SLLL and YILT…PWYT.

It is found in the membrane. This is an uncharacterized protein from Saccharomyces cerevisiae (strain ATCC 204508 / S288c) (Baker's yeast).